Consider the following 208-residue polypeptide: Imidazoleglycerol-phosphate dehydratase (208 aa).

Residues 1–20 form a disordered region; that stretch reads MSRRATVKAPRAGAAARRGA. The span at 7 to 19 shows a compositional bias: low complexity; that stretch reads VKAPRAGAAARRG.

Belongs to the imidazoleglycerol-phosphate dehydratase family.

Its subcellular location is the cytoplasm. It carries out the reaction D-erythro-1-(imidazol-4-yl)glycerol 3-phosphate = 3-(imidazol-4-yl)-2-oxopropyl phosphate + H2O. The protein operates within amino-acid biosynthesis; L-histidine biosynthesis; L-histidine from 5-phospho-alpha-D-ribose 1-diphosphate: step 6/9. This chain is Imidazoleglycerol-phosphate dehydratase, found in Anaeromyxobacter sp. (strain K).